Here is a 345-residue protein sequence, read N- to C-terminus: Fructose-1,6-bisphosphatase class 1 2 (345 aa).

Mg(2+) is bound by residues Glu-90, Asp-109, Leu-111, and Asp-112. Residues Asp-112 to Ser-115 and Asn-200 each bind substrate. Residue Glu-272 coordinates Mg(2+).

This sequence belongs to the FBPase class 1 family. As to quaternary structure, homotetramer. It depends on Mg(2+) as a cofactor.

Its subcellular location is the cytoplasm. It carries out the reaction beta-D-fructose 1,6-bisphosphate + H2O = beta-D-fructose 6-phosphate + phosphate. Its pathway is carbohydrate biosynthesis; gluconeogenesis. The sequence is that of Fructose-1,6-bisphosphatase class 1 2 from Nitrobacter hamburgensis (strain DSM 10229 / NCIMB 13809 / X14).